Consider the following 254-residue polypeptide: Vesicle transport protein USE1 (254 aa).

Topologically, residues 1–228 are cytoplasmic; that stretch reads MAYISENELK…AYKCGYDCFK (228 aa). Residues 229–249 form a helical; Anchor for type IV membrane protein membrane-spanning segment; sequence VMLIVLIFMSFVSMVLMMKIF. Residues 250-254 are Lumenal-facing; it reads KKAST.

It belongs to the USE1 family.

Its subcellular location is the endoplasmic reticulum membrane. Its function is as follows. SNARE that may be involved in targeting and fusion of Golgi-derived retrograde transport vesicles with the ER. This chain is Vesicle transport protein USE1, found in Caenorhabditis elegans.